The sequence spans 60 residues: Large ribosomal subunit protein bL32 (60 aa).

Residues 1-16 show a composition bias toward basic residues; the sequence is MAVPKRKTTPSKRGMR. The tract at residues 1-60 is disordered; it reads MAVPKRKTTPSKRGMRRSADALKQPAYVENPDSGELHRPHHVDLKSGMYRGKQILKPKGE. Basic and acidic residues predominate over residues 34-44; sequence GELHRPHHVDL.

Belongs to the bacterial ribosomal protein bL32 family.

This Parvibaculum lavamentivorans (strain DS-1 / DSM 13023 / NCIMB 13966) protein is Large ribosomal subunit protein bL32.